A 226-amino-acid chain; its full sequence is 2-C-methyl-D-erythritol 4-phosphate cytidylyltransferase (226 aa).

The protein belongs to the IspD/TarI cytidylyltransferase family. IspD subfamily.

The catalysed reaction is 2-C-methyl-D-erythritol 4-phosphate + CTP + H(+) = 4-CDP-2-C-methyl-D-erythritol + diphosphate. The protein operates within isoprenoid biosynthesis; isopentenyl diphosphate biosynthesis via DXP pathway; isopentenyl diphosphate from 1-deoxy-D-xylulose 5-phosphate: step 2/6. Its function is as follows. Catalyzes the formation of 4-diphosphocytidyl-2-C-methyl-D-erythritol from CTP and 2-C-methyl-D-erythritol 4-phosphate (MEP). The protein is 2-C-methyl-D-erythritol 4-phosphate cytidylyltransferase of Clostridium beijerinckii (strain ATCC 51743 / NCIMB 8052) (Clostridium acetobutylicum).